A 150-amino-acid chain; its full sequence is Arginine repressor (150 aa).

It belongs to the ArgR family.

It localises to the cytoplasm. It participates in amino-acid biosynthesis; L-arginine biosynthesis [regulation]. Functionally, regulates arginine biosynthesis genes. The polypeptide is Arginine repressor (Staphylococcus epidermidis (strain ATCC 35984 / DSM 28319 / BCRC 17069 / CCUG 31568 / BM 3577 / RP62A)).